Reading from the N-terminus, the 593-residue chain is Meiotic recombination protein REC8 homolog (593 aa).

Serine 149 is subject to Phosphoserine. Threonine 164 carries the post-translational modification Phosphothreonine. Serine 192 is modified (phosphoserine). Disordered stretches follow at residues 247-282 (QRRA…AQVE), 317-344 (ELRL…RRGR), and 422-444 (PQLE…RRKT). Over residues 255-265 (DESKEEPRALE) the composition is skewed to basic and acidic residues. Basic and acidic residues predominate over residues 432–444 (EERVADKEERRKT).

This sequence belongs to the rad21 family. In terms of assembly, interacts (phosphorylated and unphosphorylated form) with SMC3. Interacts with SYCP3. Interacts (phosphorylated and unphosphorylated form) with SMC1B. Does not interact with SMC1A. Interacts with RAD51. Forms a complex with EWSR1, PRDM9, SYCP3 and SYCP1; complex formation is dependent of phosphorylated form of REC8 and requires PRDM9 bound to hotspot DNA; EWSR1 joins PRDM9 with the chromosomal axis through REC8. Phosphorylated.

It localises to the nucleus. Its subcellular location is the chromosome. The protein resides in the centromere. Its function is as follows. Required during meiosis for separation of sister chromatids and homologous chromosomes. Proteolytic cleavage of REC8 on chromosome arms by separin during anaphase I allows for homologous chromosome separation in meiosis I and cleavage of REC8 on centromeres during anaphase II allows for sister chromatid separation in meiosis II. The chain is Meiotic recombination protein REC8 homolog from Rattus norvegicus (Rat).